Here is a 437-residue protein sequence, read N- to C-terminus: Protein farnesyltransferase subunit beta (437 aa).

PFTB repeat units follow at residues 123–164 (ATDV…CIIG), 174–215 (REKL…SLTN), 222–263 (FEGT…VILK), 270–312 (LKSL…PLLH), and 332–374 (QQAL…SIAQ). (2E,6E)-farnesyl diphosphate is bound by residues 248–251 (HGGY) and 291–294 (RCNK). Zn(2+) contacts are provided by aspartate 297 and cysteine 299. Residue 300 to 303 (YSFW) coordinates (2E,6E)-farnesyl diphosphate. Histidine 362 lines the Zn(2+) pocket. At serine 432 the chain carries Phosphoserine. Threonine 436 carries the post-translational modification Phosphothreonine.

Belongs to the protein prenyltransferase subunit beta family. As to quaternary structure, heterodimer of FNTA and FNTB. The cofactor is Zn(2+).

It carries out the reaction L-cysteinyl-[protein] + (2E,6E)-farnesyl diphosphate = S-(2E,6E)-farnesyl-L-cysteinyl-[protein] + diphosphate. Essential subunit of the farnesyltransferase complex. Catalyzes the transfer of a farnesyl moiety from farnesyl diphosphate to a cysteine at the fourth position from the C-terminus of several proteins having the C-terminal sequence Cys-aliphatic-aliphatic-X. The chain is Protein farnesyltransferase subunit beta (Fntb) from Rattus norvegicus (Rat).